Reading from the N-terminus, the 274-residue chain is Karrikin insensitive 2 receptor IA (274 aa).

The active-site Nucleophile is the S95. Catalysis depends on residues D217 and H246.

Belongs to the AB hydrolase superfamily. Interacts with MAX2A and MAX2B in the presence of (-)-germacrene D, thus forming an E3 SCF ubiquitin ligase complex (ASK-cullin-F-box) containing MAX2A or MAX2B and KAI2IA recognizing SMAX1A; this leads to the subsequent degradation of the transcriptional corepressor SMAX1A, thus triggering the activation of a downstream signaling cascade. Strongly expressed in stigma.

Its subcellular location is the nucleus. The protein localises to the cytoplasm. With respect to regulation, hydrolysis activity toward yoshimulactone green (YLG), a fluorescent agonist to strigolactone receptor, is inhibited by (-)-germacrene D and GR24, a synthetic strigolactone analog. Its function is as follows. Hydrolase involved in the olfaction of sesquiterpene volatile organic compounds (VOCs) during volatile plant communication in a MAX2 proteins-dependent manner. Acts as a karrikin-insensitive receptor that stereospecifically perceives and binds to (-)-germacrene D, particularly in stigmas, and triggers a signaling cascade influencing plant fitness, as the result of reproductive organ growth-promoting effect; this process involves an interaction with MAX2 proteins (e.g. MAX2A and MAX2B) and the subsequent degradation of SMAX1a, a transcriptional corepressor. The protein is Karrikin insensitive 2 receptor IA of Petunia hybrida (Petunia).